We begin with the raw amino-acid sequence, 212 residues long: Pyrrolidone-carboxylate peptidase (212 aa).

Catalysis depends on residues E78, C141, and H165.

Belongs to the peptidase C15 family. Homotetramer.

The protein resides in the cytoplasm. It catalyses the reaction Release of an N-terminal pyroglutamyl group from a polypeptide, the second amino acid generally not being Pro.. In terms of biological role, removes 5-oxoproline from various penultimate amino acid residues except L-proline. This chain is Pyrrolidone-carboxylate peptidase, found in Staphylococcus aureus (strain NCTC 8325 / PS 47).